The following is a 550-amino-acid chain: (+)-germacrene D synthase (550 aa).

The Mg(2+) site is built by Asp304, Asp308, and Glu455. The DDXXD motif motif lies at 304–308 (DDIYD).

This sequence belongs to the terpene synthase family. Tpsa subfamily. Mg(2+) serves as cofactor. Mn(2+) is required as a cofactor. It depends on Co(2+) as a cofactor. Requires Ni(2+) as cofactor.

It is found in the cytoplasm. It carries out the reaction (2E,6E)-farnesyl diphosphate = (+)-germacrene D + diphosphate. The protein operates within secondary metabolite biosynthesis; terpenoid biosynthesis. Functionally, involved in the biosynthesis of germacrene D. Can use farnesyl diphosphate as substrate, but not geranyl diphosphate. Produces mainly (+)-germacrene D along with germacrene B and a number of minor by-products. This is (+)-germacrene D synthase from Zingiber officinale (Ginger).